The sequence spans 634 residues: Chaperone protein HtpG (634 aa).

An a; substrate-binding region spans residues 1–344 (MSETVSQNKE…SNDLPLNVSR (344 aa)). A b region spans residues 345–561 (EILQDNKVTQ…DYEMGTQMAK (217 aa)). Residues 562–634 (LLAAAGQAVP…GAINKLLTKV (73 aa)) form a c region.

The protein belongs to the heat shock protein 90 family. Homodimer.

It localises to the cytoplasm. In terms of biological role, molecular chaperone. Has ATPase activity. The protein is Chaperone protein HtpG of Vibrio parahaemolyticus serotype O3:K6 (strain RIMD 2210633).